The primary structure comprises 750 residues: MIIRSPEPEVKILVDRDPIKTSFEEWARPGHFSRTIAKGPDTTTWIWNLHADAHDFDSHTSDLEEISRKVFSAHFGQLSIIFLWLSGMYFHGARFSNYEAWLSDPTHIGPSAQVVWPIVGQEILNGDVGGGFRGIQITSGFFQIWRASGITSELQLYCTAIGALVFAALMLFAGWFHYHKAAPKLAWFQDVESMLNHHLAGLLGLGSLSWAGHQVHVSLPINQFLNAGVDPKEIPLPHEFILNRDLLAQLYPSFAEGATPFFTLNWSKYSEFLTFRGGLDPVTGGLWLTDIAHHHLAIAILFLVAGHMYRTNWGIGHGIKDILEAHKGPFTGQGHKGLYEILTTSWHAQLSLNLAMLGSLTIVVAHHMYAMPPYPYLATDYGTQLSLFTHHMWIGGFLIVGAAAHAAIFMVRDYDPTTRYNDLLDRVLRHRDAIISHLNWVCIFLGFHSFGLYIHNDTMSALGRPQDMFSDTAIQLQPVFAQWIQNTHALAPGATAPGATASTSLTWGGDDLVAVGGKVALLPIPLGTADFLVHHIHAFTIHVTVLILLKGVLFARSSRLIPDKANLGFRFPCDGPGRGGTCQVSAWDHVFLGLFWMYNAISVVIFHFSWKMQSDVWGSISDQGVVTHITGGNFAQSSITINGWLRDFLWAQASQVIQSYGSSLSAYGLFFLGAHFVWAFSLMFLFSGRGYWQELIESIVWAHNKLKVAPATQPRALSIIQGRAVGVTHYLLGGIATTWAFFLARIIAVG.

A run of 8 helical transmembrane segments spans residues 70-93 (VFSA…FHGA), 156-179 (LYCT…FHYH), 195-219 (LNHH…HVSL), 291-309 (IAHH…GHMY), 346-369 (WHAQ…HHMY), 385-411 (LSLF…IFMV), 433-455 (AIIS…LYIH), and 531-549 (FLVH…LILL). [4Fe-4S] cluster is bound by residues cysteine 573 and cysteine 582. The next 2 helical transmembrane spans lie at 589 to 610 (HVFL…HFSW) and 664 to 686 (LSAY…MFLF). Histidine 675 serves as a coordination point for chlorophyll a'. The chlorophyll a site is built by methionine 683 and tyrosine 691. Phylloquinone is bound at residue tryptophan 692. Residues 724-744 (AVGVTHYLLGGIATTWAFFLA) form a helical membrane-spanning segment.

Belongs to the PsaA/PsaB family. The PsaA/B heterodimer binds the P700 chlorophyll special pair and subsequent electron acceptors. PSI consists of a core antenna complex that captures photons, and an electron transfer chain that converts photonic excitation into a charge separation. The eukaryotic PSI reaction center is composed of at least 11 subunits. It depends on P700 is a chlorophyll a/chlorophyll a' dimer, A0 is one or more chlorophyll a, A1 is one or both phylloquinones and FX is a shared 4Fe-4S iron-sulfur center. as a cofactor.

The protein localises to the plastid. Its subcellular location is the chloroplast thylakoid membrane. The enzyme catalyses reduced [plastocyanin] + hnu + oxidized [2Fe-2S]-[ferredoxin] = oxidized [plastocyanin] + reduced [2Fe-2S]-[ferredoxin]. In terms of biological role, psaA and PsaB bind P700, the primary electron donor of photosystem I (PSI), as well as the electron acceptors A0, A1 and FX. PSI is a plastocyanin-ferredoxin oxidoreductase, converting photonic excitation into a charge separation, which transfers an electron from the donor P700 chlorophyll pair to the spectroscopically characterized acceptors A0, A1, FX, FA and FB in turn. Oxidized P700 is reduced on the lumenal side of the thylakoid membrane by plastocyanin. In Populus trichocarpa (Western balsam poplar), this protein is Photosystem I P700 chlorophyll a apoprotein A1.